The sequence spans 414 residues: Carboxynorspermidine synthase (414 aa).

The protein belongs to the saccharopine dehydrogenase family. Carboxynorspermidine synthase subfamily. In terms of assembly, homodimer.

The enzyme catalyses carboxynorspermidine + NADP(+) + H2O = L-aspartate 4-semialdehyde + propane-1,3-diamine + NADPH + H(+). It carries out the reaction carboxyspermidine + NADP(+) + H2O = L-aspartate 4-semialdehyde + putrescine + NADPH + H(+). Its activity is regulated as follows. Activated by dithiothreitol and inhibited by SH-reactive compounds. Involved in norspermidine biosynthesis. Catalyzes the synthesis of carboxynorspermidine from L-aspartate 4-semialdehyde and 1,3-diaminopropane. Is also slightly active with putrescine as a substrate. In Vibrio alginolyticus (strain ATCC 17749 / DSM 2171 / NBRC 15630 / NCIMB 1903 / NCTC 12160 / XII-53), this protein is Carboxynorspermidine synthase.